Reading from the N-terminus, the 301-residue chain is Glycine--tRNA ligase alpha subunit (301 aa).

The protein belongs to the class-II aminoacyl-tRNA synthetase family. Tetramer of two alpha and two beta subunits.

It is found in the cytoplasm. It catalyses the reaction tRNA(Gly) + glycine + ATP = glycyl-tRNA(Gly) + AMP + diphosphate. The sequence is that of Glycine--tRNA ligase alpha subunit from Campylobacter hominis (strain ATCC BAA-381 / DSM 21671 / CCUG 45161 / LMG 19568 / NCTC 13146 / CH001A).